The chain runs to 241 residues: Leucyl/phenylalanyl-tRNA--protein transferase (241 aa).

The protein belongs to the L/F-transferase family.

Its subcellular location is the cytoplasm. It catalyses the reaction N-terminal L-lysyl-[protein] + L-leucyl-tRNA(Leu) = N-terminal L-leucyl-L-lysyl-[protein] + tRNA(Leu) + H(+). It carries out the reaction N-terminal L-arginyl-[protein] + L-leucyl-tRNA(Leu) = N-terminal L-leucyl-L-arginyl-[protein] + tRNA(Leu) + H(+). The enzyme catalyses L-phenylalanyl-tRNA(Phe) + an N-terminal L-alpha-aminoacyl-[protein] = an N-terminal L-phenylalanyl-L-alpha-aminoacyl-[protein] + tRNA(Phe). Functions in the N-end rule pathway of protein degradation where it conjugates Leu, Phe and, less efficiently, Met from aminoacyl-tRNAs to the N-termini of proteins containing an N-terminal arginine or lysine. The chain is Leucyl/phenylalanyl-tRNA--protein transferase from Neisseria meningitidis serogroup C (strain 053442).